The following is a 407-amino-acid chain: MAAPGAPRSLLLLLLAGLAHGASALFVVKDSNGTACIMANFSASFFTIYETGHGSKNSTFELPSSAEVLNSNSSCGRENVSEPILTIAFGSGYLLTLNFTRNATRYSVQDMYFAYNLSDTQHFLNASNKGIHSVDSSTDIKADINKTYRCLSAIQVHMGNVTVTLSDATIQAYLLNSNFSKEETRCTQDGPSPTTVPPSPSPPLVPTNPTVIKYNVTGENGTCLLASMALQMNITYMKKDNMTVTRALNISPNDTASGSCSPHVVTLTVESKNSILDLKFGMNGSSSLFFLQEVRLNMTLPDANVSSLMASNQSLRALQATVGNSYKCNTEEHIFVTKEFSLNVFSVQVQAFKVESDRFGSVEECMQDGNNMLIPIAVGGALAGLVLIVLIAYLIGRKRSHAGYQTI.

A signal peptide spans 1 to 21 (MAAPGAPRSLLLLLLAGLAHG). The interval 22–189 (ASALFVVKDS…SKEETRCTQD (168 aa)) is first lumenal domain. At 22-371 (ASALFVVKDS…VEECMQDGNN (350 aa)) the chain is on the lumenal side. N-linked (GlcNAc...) asparagine glycans are attached at residues Asn32, Asn40, Asn57, Asn72, Asn79, Asn98, Asn102, Asn116, Asn125, Asn145, Asn160, and Asn178. A disulfide bond links Cys36 and Cys75. The cysteines at positions 150 and 186 are disulfide-linked. The disordered stretch occupies residues 183 to 206 (ETRCTQDGPSPTTVPPSPSPPLVP). The hinge stretch occupies residues 190-219 (GPSPTTVPPSPSPPLVPTNPTVIKYNVTGE). Residues 194–206 (TTVPPSPSPPLVP) show a composition bias toward pro residues. 9 N-linked (GlcNAc...) asparagine glycosylation sites follow: Asn215, Asn220, Asn233, Asn241, Asn253, Asn283, Asn297, Asn304, and Asn312. Residues 220-371 (NGTCLLASMA…VEECMQDGNN (152 aa)) form a second lumenal domain region. Cys223 and Cys260 form a disulfide bridge. Cys328 and Cys365 are disulfide-bonded. The helical transmembrane segment at 372-395 (MLIPIAVGGALAGLVLIVLIAYLI) threads the bilayer. At 396–407 (GRKRSHAGYQTI) the chain is on the cytoplasmic side.

It belongs to the LAMP family. As to quaternary structure, interacts with ABCB9; this interaction strongly stabilizes ABCB9 and protects ABCB9 against lysosomal degradation. Interacts with FURIN. Interacts with TMEM175; inhibiting the proton channel activity of TMEM175. Post-translationally, O- and N-glycosylated; some of the N-glycans attached to LAMP-1 are polylactosaminoglycans.

It is found in the lysosome membrane. The protein resides in the endosome membrane. It localises to the late endosome membrane. The protein localises to the cell membrane. Its subcellular location is the cytolytic granule membrane. Lysosomal membrane glycoprotein which plays an important role in lysosome biogenesis, lysosomal pH regulation, autophagy and cholesterol homeostasis. Acts as an important regulator of lysosomal lumen pH regulation by acting as a direct inhibitor of the proton channel TMEM175, facilitating lysosomal acidification for optimal hydrolase activity. Also plays an important role in NK-cells cytotoxicity. Mechanistically, participates in cytotoxic granule movement to the cell surface and perforin trafficking to the lytic granule. In addition, protects NK-cells from degranulation-associated damage induced by their own cytotoxic granule content. Presents carbohydrate ligands to selectins. The chain is Lysosome-associated membrane glycoprotein 1 (LAMP1) from Cricetulus griseus (Chinese hamster).